The primary structure comprises 135 residues: Cytochrome c-type biogenesis protein CcmE (135 aa).

At 1 to 8 the chain is on the cytoplasmic side; sequence MLLLRWKR. A helical; Signal-anchor for type II membrane protein membrane pass occupies residues 9–29; that stretch reads FWFLSLGILLFSGVVSLMLFN. At 30–135 the chain is on the periplasmic side; that stretch reads LSESISFFYL…EDFIKSVRGE (106 aa). Heme-binding residues include H118 and Y122.

It belongs to the CcmE/CycJ family.

The protein resides in the cell inner membrane. Its function is as follows. Heme chaperone required for the biogenesis of c-type cytochromes. Transiently binds heme delivered by CcmC and transfers the heme to apo-cytochromes in a process facilitated by CcmF and CcmH. In Neorickettsia sennetsu (strain ATCC VR-367 / Miyayama) (Ehrlichia sennetsu), this protein is Cytochrome c-type biogenesis protein CcmE.